A 228-amino-acid chain; its full sequence is Cytochrome c oxidase subunit 2 (228 aa).

The Mitochondrial intermembrane segment spans residues 1 to 14; that stretch reads MPHASQLSLQEAMG. The chain crosses the membrane as a helical span at residues 15–45; that stretch reads PTMEEVIFLHDHVLLLTCLMTMVITMFTLTA. Residues 46 to 59 are Mitochondrial matrix-facing; sequence TTTALTHNDPTEEV. A helical membrane pass occupies residues 60 to 87; sequence EQLEAAWTVAPIMILILTALPSVRSLYL. Residues 88-228 lie on the Mitochondrial intermembrane side of the membrane; it reads MEEVFNPYLT…HFEQWLISEQ (141 aa). Residues His-162, Cys-197, Glu-199, Cys-201, His-205, and Met-208 each contribute to the Cu cation site. A Mg(2+)-binding site is contributed by Glu-199.

This sequence belongs to the cytochrome c oxidase subunit 2 family. As to quaternary structure, component of the cytochrome c oxidase (complex IV, CIV), a multisubunit enzyme composed of 14 subunits. The complex is composed of a catalytic core of 3 subunits MT-CO1, MT-CO2 and MT-CO3, encoded in the mitochondrial DNA, and 11 supernumerary subunits COX4I, COX5A, COX5B, COX6A, COX6B, COX6C, COX7A, COX7B, COX7C, COX8 and NDUFA4, which are encoded in the nuclear genome. The complex exists as a monomer or a dimer and forms supercomplexes (SCs) in the inner mitochondrial membrane with NADH-ubiquinone oxidoreductase (complex I, CI) and ubiquinol-cytochrome c oxidoreductase (cytochrome b-c1 complex, complex III, CIII), resulting in different assemblies (supercomplex SCI(1)III(2)IV(1) and megacomplex MCI(2)III(2)IV(2)). Found in a complex with TMEM177, COA6, COX18, COX20, SCO1 and SCO2. Interacts with TMEM177 in a COX20-dependent manner. Interacts with COX20. Interacts with COX16. Cu cation is required as a cofactor.

It localises to the mitochondrion inner membrane. The enzyme catalyses 4 Fe(II)-[cytochrome c] + O2 + 8 H(+)(in) = 4 Fe(III)-[cytochrome c] + 2 H2O + 4 H(+)(out). Component of the cytochrome c oxidase, the last enzyme in the mitochondrial electron transport chain which drives oxidative phosphorylation. The respiratory chain contains 3 multisubunit complexes succinate dehydrogenase (complex II, CII), ubiquinol-cytochrome c oxidoreductase (cytochrome b-c1 complex, complex III, CIII) and cytochrome c oxidase (complex IV, CIV), that cooperate to transfer electrons derived from NADH and succinate to molecular oxygen, creating an electrochemical gradient over the inner membrane that drives transmembrane transport and the ATP synthase. Cytochrome c oxidase is the component of the respiratory chain that catalyzes the reduction of oxygen to water. Electrons originating from reduced cytochrome c in the intermembrane space (IMS) are transferred via the dinuclear copper A center (CU(A)) of subunit 2 and heme A of subunit 1 to the active site in subunit 1, a binuclear center (BNC) formed by heme A3 and copper B (CU(B)). The BNC reduces molecular oxygen to 2 water molecules using 4 electrons from cytochrome c in the IMS and 4 protons from the mitochondrial matrix. The protein is Cytochrome c oxidase subunit 2 (MT-CO2) of Lycodon semicarinatus (Ryukyu odd-tooth snake).